Here is a 633-residue protein sequence, read N- to C-terminus: DNA mismatch repair protein MutL (633 aa).

It belongs to the DNA mismatch repair MutL/HexB family.

Functionally, this protein is involved in the repair of mismatches in DNA. It is required for dam-dependent methyl-directed DNA mismatch repair. May act as a 'molecular matchmaker', a protein that promotes the formation of a stable complex between two or more DNA-binding proteins in an ATP-dependent manner without itself being part of a final effector complex. The chain is DNA mismatch repair protein MutL from Pseudomonas fluorescens (strain SBW25).